Here is a 1171-residue protein sequence, read N- to C-terminus: Zinc finger BED domain-containing protein 4 (1171 aa).

Positions 25–62 (EEEDDDGIPPDSLERMDFKSEQEDMKQTDSGGERAGLG) are disordered. Over residues 36–51 (SLERMDFKSEQEDMKQ) the composition is skewed to basic and acidic residues. A Glycyl lysine isopeptide (Lys-Gly) (interchain with G-Cter in SUMO2) cross-link involves residue Lys43. 2 BED-type zinc fingers span residues 115–172 (RKKS…LIQE) and 285–342 (RRRS…VLQE). Residues Cys136, Cys139, His160, His165, Cys306, Cys309, His330, and His335 each coordinate Zn(2+). Residues 362–385 (LLPPEGELSSVSSSPVKPVRESPS) show a composition bias toward low complexity. A disordered region spans residues 362–405 (LLPPEGELSSVSSSPVKPVRESPSASSSPDRLTEDLQSHLNPGD). 2 consecutive BED-type zinc fingers follow at residues 456–512 (RLKS…VGSQ) and 558–615 (KKTS…LKTE). Residues Cys477 and Cys480 each coordinate Zn(2+). Lys489 participates in a covalent cross-link: Glycyl lysine isopeptide (Lys-Gly) (interchain with G-Cter in SUMO2). Zn(2+)-binding residues include His500, His505, Cys579, Cys582, His603, and His608. Residues 614–640 (TEVSETARPSSPDTRVPRGTELSGASS) are disordered. Ser624 carries the phosphoserine modification. The tract at residues 1086 to 1171 (LAYLEEEVLE…VNLPLIYFQY (86 aa)) is required for homodimerization and nuclear accumulation.

In terms of assembly, homodimer; via C-terminus. Interacts with MYH9. Interacts with SAFB/SAFB1. As to expression, expressed in testis, heart, lung, and weakly expressed in brain, liver, muscle, placenta and small intestine. Expressed in the retina, found in the cone photoreceptors, Mueller cells, cone pedicles and in the innermost retinal layer.

It is found in the nucleus. The protein localises to the cytoplasm. It localises to the photoreceptor inner segment. In terms of biological role, transcriptional regulator that binds to poly-guanine tracts in gene promoters and activates transcription. Able to bind single- and double-stranded DNA and RNA. In Homo sapiens (Human), this protein is Zinc finger BED domain-containing protein 4 (ZBED4).